The sequence spans 194 residues: Inosine triphosphate pyrophosphatase (194 aa).

An ITP-binding site is contributed by 10-15 (TGNANK). A Mg(2+)-binding site is contributed by Glu-41. Residues Lys-54, 72–73 (DT), Lys-89, 147–150 (FGWD), Lys-172, and 177–178 (QR) contribute to the ITP site.

This sequence belongs to the HAM1 NTPase family. As to quaternary structure, homodimer. Mg(2+) serves as cofactor. It depends on Mn(2+) as a cofactor.

It localises to the cytoplasm. The protein localises to the nucleus. It carries out the reaction ITP + H2O = IMP + diphosphate + H(+). It catalyses the reaction dITP + H2O = dIMP + diphosphate + H(+). The catalysed reaction is XTP + H2O = XMP + diphosphate + H(+). Pyrophosphatase that hydrolyzes non-canonical purine nucleotides such as inosine triphosphate (ITP), deoxyinosine triphosphate (dITP) or xanthosine 5'-triphosphate (XTP) to their respective monophosphate derivatives. The enzyme does not distinguish between the deoxy- and ribose forms. Probably excludes non-canonical purines from RNA and DNA precursor pools, thus preventing their incorporation into RNA and DNA and avoiding chromosomal lesions. The sequence is that of Inosine triphosphate pyrophosphatase from Kluyveromyces lactis (strain ATCC 8585 / CBS 2359 / DSM 70799 / NBRC 1267 / NRRL Y-1140 / WM37) (Yeast).